We begin with the raw amino-acid sequence, 183 residues long: Inner membrane-spanning protein YciB (183 aa).

A run of 5 helical transmembrane segments spans residues 19 to 39, 53 to 73, 76 to 96, 121 to 141, and 151 to 171; these read LYGV…QLIV, IMGI…DLNF, WKVT…QFVF, LGWA…SYYF, and TFGF…YLYP.

It belongs to the YciB family.

It is found in the cell inner membrane. Its function is as follows. Plays a role in cell envelope biogenesis, maintenance of cell envelope integrity and membrane homeostasis. The polypeptide is Inner membrane-spanning protein YciB (Actinobacillus pleuropneumoniae serotype 3 (strain JL03)).